Consider the following 174-residue polypeptide: Shikimate kinase (174 aa).

14–19 lines the ATP pocket; that stretch reads GAGKST. Ser18 serves as a coordination point for Mg(2+). Positions 36, 60, and 82 each coordinate substrate. Arg120 lines the ATP pocket. Arg139 is a binding site for substrate. Gln156 is a binding site for ATP.

It belongs to the shikimate kinase family. As to quaternary structure, monomer. Mg(2+) is required as a cofactor.

The protein resides in the cytoplasm. It carries out the reaction shikimate + ATP = 3-phosphoshikimate + ADP + H(+). Its pathway is metabolic intermediate biosynthesis; chorismate biosynthesis; chorismate from D-erythrose 4-phosphate and phosphoenolpyruvate: step 5/7. Its function is as follows. Catalyzes the specific phosphorylation of the 3-hydroxyl group of shikimic acid using ATP as a cosubstrate. This chain is Shikimate kinase, found in Vibrio cholerae serotype O1 (strain ATCC 39541 / Classical Ogawa 395 / O395).